Reading from the N-terminus, the 449-residue chain is Bifunctional protein GlmU (449 aa).

A pyrophosphorylase region spans residues 1-229 (MNHFAVILAA…FEETIGVNDR (229 aa)). UDP-N-acetyl-alpha-D-glucosamine is bound by residues 8 to 11 (LAAG), K22, Q72, and 77 to 78 (GT). Residue D102 participates in Mg(2+) binding. Positions 139, 154, 169, and 227 each coordinate UDP-N-acetyl-alpha-D-glucosamine. Mg(2+) is bound at residue N227. The linker stretch occupies residues 230–250 (VALAQAETSMRKRTNEHWMRQ). The N-acetyltransferase stretch occupies residues 251 to 449 (GVTFIDPAST…ERQTTKPDYR (199 aa)). R332 and K350 together coordinate UDP-N-acetyl-alpha-D-glucosamine. H362 serves as the catalytic Proton acceptor. Positions 365 and 376 each coordinate UDP-N-acetyl-alpha-D-glucosamine. Acetyl-CoA-binding positions include 385–386 (NY), A422, and R439.

This sequence in the N-terminal section; belongs to the N-acetylglucosamine-1-phosphate uridyltransferase family. It in the C-terminal section; belongs to the transferase hexapeptide repeat family. In terms of assembly, homotrimer. Mg(2+) serves as cofactor.

The protein resides in the cytoplasm. The catalysed reaction is alpha-D-glucosamine 1-phosphate + acetyl-CoA = N-acetyl-alpha-D-glucosamine 1-phosphate + CoA + H(+). It catalyses the reaction N-acetyl-alpha-D-glucosamine 1-phosphate + UTP + H(+) = UDP-N-acetyl-alpha-D-glucosamine + diphosphate. Its pathway is nucleotide-sugar biosynthesis; UDP-N-acetyl-alpha-D-glucosamine biosynthesis; N-acetyl-alpha-D-glucosamine 1-phosphate from alpha-D-glucosamine 6-phosphate (route II): step 2/2. It functions in the pathway nucleotide-sugar biosynthesis; UDP-N-acetyl-alpha-D-glucosamine biosynthesis; UDP-N-acetyl-alpha-D-glucosamine from N-acetyl-alpha-D-glucosamine 1-phosphate: step 1/1. It participates in bacterial outer membrane biogenesis; LPS lipid A biosynthesis. In terms of biological role, catalyzes the last two sequential reactions in the de novo biosynthetic pathway for UDP-N-acetylglucosamine (UDP-GlcNAc). The C-terminal domain catalyzes the transfer of acetyl group from acetyl coenzyme A to glucosamine-1-phosphate (GlcN-1-P) to produce N-acetylglucosamine-1-phosphate (GlcNAc-1-P), which is converted into UDP-GlcNAc by the transfer of uridine 5-monophosphate (from uridine 5-triphosphate), a reaction catalyzed by the N-terminal domain. The protein is Bifunctional protein GlmU of Exiguobacterium sibiricum (strain DSM 17290 / CCUG 55495 / CIP 109462 / JCM 13490 / 255-15).